The chain runs to 425 residues: Synaptotagmin-4 (425 aa).

The Vesicular portion of the chain corresponds to 1-16 (MAPITTSREEFDEIPT). The helical transmembrane segment at 17 to 37 (VVGIFSAFGLVFTVSLFAWIC) threads the bilayer. The Cytoplasmic segment spans residues 38–425 (CQRKSSKSNK…IAKWHVLCDG (388 aa)). Over residues 73–83 (FGADDKNEVKN) the composition is skewed to basic and acidic residues. Disordered stretches follow at residues 73–93 (FGAD…NSLH) and 127–147 (LEGE…SLTS). A Phosphoserine; by MAPK8 modification is found at serine 135. Positions 135–146 (SPESLKSSTSLT) are enriched in low complexity. 2 consecutive C2 domains span residues 153–274 (KLGT…MLMN) and 287–420 (GRGE…AKWH). Residues aspartate 246, serine 249, and aspartate 252 each contribute to the Ca(2+) site.

This sequence belongs to the synaptotagmin family. Interacts with KIF1A; the interaction increases in presence of calcium and decreases when SYT4 is phosphorylated at Ser-135. Requires Ca(2+) as cofactor. Phosphorylation at Ser-135 by MAPK8/JNK1 reduces interaction with KIF1A and neuronal dense core vesicles mobility. As to expression, expressed in melanocytes. Expressed in brain. Within brain, expression is highest in hippocampus, with substantial levels also detected in amygdala and thalamus.

The protein resides in the cytoplasmic vesicle. The protein localises to the secretory vesicle. It is found in the neuronal dense core vesicle membrane. Synaptotagmin family member which does not bind Ca(2+). Involved in neuronal dense core vesicles (DCVs) mobility through its interaction with KIF1A. Upon increased neuronal activity, phosphorylation by MAPK8/JNK1 destabilizes the interaction with KIF1A and captures DCVs to synapses. Plays a role in dendrite formation by melanocytes. This Homo sapiens (Human) protein is Synaptotagmin-4 (SYT4).